Consider the following 229-residue polypeptide: ATP-dependent Clp protease proteolytic subunit 1 (229 aa).

S129 functions as the Nucleophile in the catalytic mechanism. H154 is an active-site residue.

This sequence belongs to the peptidase S14 family. As to quaternary structure, fourteen ClpP subunits assemble into 2 heptameric rings which stack back to back to give a disk-like structure with a central cavity, resembling the structure of eukaryotic proteasomes.

It localises to the cytoplasm. The enzyme catalyses Hydrolysis of proteins to small peptides in the presence of ATP and magnesium. alpha-casein is the usual test substrate. In the absence of ATP, only oligopeptides shorter than five residues are hydrolyzed (such as succinyl-Leu-Tyr-|-NHMec, and Leu-Tyr-Leu-|-Tyr-Trp, in which cleavage of the -Tyr-|-Leu- and -Tyr-|-Trp bonds also occurs).. Cleaves peptides in various proteins in a process that requires ATP hydrolysis. Has a chymotrypsin-like activity. Plays a major role in the degradation of misfolded proteins. This is ATP-dependent Clp protease proteolytic subunit 1 from Thermosynechococcus vestitus (strain NIES-2133 / IAM M-273 / BP-1).